The following is a 554-amino-acid chain: Valerianol synthase TPS1F (554 aa).

Residues D307 and D311 each contribute to the Mg(2+) site. The DDXXD motif signature appears at 326-330 (VQRWD). Mg(2+) is bound by residues D452, S456, and E460.

The protein belongs to the terpene synthase family. It depends on Mg(2+) as a cofactor.

It carries out the reaction (2E,6E)-farnesyl diphosphate + H2O = valerianol + diphosphate. It functions in the pathway secondary metabolite biosynthesis; terpenoid biosynthesis. Functionally, terpene synthase that catalyzes the biosynthesis of the terpene valerianol, which is a volatile compound of floral scent. This is Valerianol synthase TPS1F from Camellia hiemalis (Camellia).